Reading from the N-terminus, the 432-residue chain is Adenylosuccinate synthetase (432 aa).

Residues 12-18 (GDEGKGK) and 40-42 (GHT) each bind GTP. The active-site Proton acceptor is Asp13. Mg(2+)-binding residues include Asp13 and Gly40. Residues 13-16 (DEGK), 38-41 (NAGH), Thr130, Arg144, Gln225, Thr240, and Arg304 contribute to the IMP site. Residue His41 is the Proton donor of the active site. 300–306 (ATTGRPR) contributes to the substrate binding site. GTP contacts are provided by residues Arg306, 332–334 (KLD), and 414–416 (SVG).

It belongs to the adenylosuccinate synthetase family. In terms of assembly, homodimer. Mg(2+) is required as a cofactor.

The protein resides in the cytoplasm. The catalysed reaction is IMP + L-aspartate + GTP = N(6)-(1,2-dicarboxyethyl)-AMP + GDP + phosphate + 2 H(+). It functions in the pathway purine metabolism; AMP biosynthesis via de novo pathway; AMP from IMP: step 1/2. Functionally, plays an important role in the de novo pathway of purine nucleotide biosynthesis. Catalyzes the first committed step in the biosynthesis of AMP from IMP. In Anaeromyxobacter sp. (strain K), this protein is Adenylosuccinate synthetase.